A 144-amino-acid polypeptide reads, in one-letter code: Flagellar assembly factor FliW (144 aa).

It belongs to the FliW family. Interacts with translational regulator CsrA and flagellin(s).

The protein localises to the cytoplasm. In terms of biological role, acts as an anti-CsrA protein, binds CsrA and prevents it from repressing translation of its target genes, one of which is flagellin. Binds to flagellin and participates in the assembly of the flagellum. This chain is Flagellar assembly factor FliW, found in Geobacillus sp. (strain WCH70).